A 342-amino-acid chain; its full sequence is UDP-3-O-acylglucosamine N-acyltransferase (342 aa).

The active-site Proton acceptor is His253.

Belongs to the transferase hexapeptide repeat family. LpxD subfamily. Homotrimer.

It catalyses the reaction a UDP-3-O-[(3R)-3-hydroxyacyl]-alpha-D-glucosamine + a (3R)-hydroxyacyl-[ACP] = a UDP-2-N,3-O-bis[(3R)-3-hydroxyacyl]-alpha-D-glucosamine + holo-[ACP] + H(+). It functions in the pathway bacterial outer membrane biogenesis; LPS lipid A biosynthesis. Functionally, catalyzes the N-acylation of UDP-3-O-acylglucosamine using 3-hydroxyacyl-ACP as the acyl donor. Is involved in the biosynthesis of lipid A, a phosphorylated glycolipid that anchors the lipopolysaccharide to the outer membrane of the cell. The sequence is that of UDP-3-O-acylglucosamine N-acyltransferase from Rickettsia canadensis (strain McKiel).